Here is a 394-residue protein sequence, read N- to C-terminus: Elongation factor Tu 1 (394 aa).

The 195-residue stretch at 10-204 folds into the tr-type G domain; that stretch reads KPHVNVGTIG…ALDSYIPEPE (195 aa). The interval 19-26 is G1; it reads GHVDHGKT. 19-26 lines the GTP pocket; it reads GHVDHGKT. Residue T26 participates in Mg(2+) binding. The G2 stretch occupies residues 60–64; the sequence is GITIN. A G3 region spans residues 81-84; the sequence is DCPG. GTP-binding positions include 81 to 85 and 136 to 139; these read DCPGH and NKCD. The G4 stretch occupies residues 136–139; the sequence is NKCD. A G5 region spans residues 174–176; that stretch reads SAL.

Belongs to the TRAFAC class translation factor GTPase superfamily. Classic translation factor GTPase family. EF-Tu/EF-1A subfamily. Monomer.

Its subcellular location is the cytoplasm. It carries out the reaction GTP + H2O = GDP + phosphate + H(+). Its function is as follows. GTP hydrolase that promotes the GTP-dependent binding of aminoacyl-tRNA to the A-site of ribosomes during protein biosynthesis. This is Elongation factor Tu 1 from Shewanella oneidensis (strain ATCC 700550 / JCM 31522 / CIP 106686 / LMG 19005 / NCIMB 14063 / MR-1).